Reading from the N-terminus, the 744-residue chain is Probable ubiquitin carboxyl-terminal hydrolase MINDY-4 (744 aa).

Ser143, Ser220, and Ser224 each carry phosphoserine. The interval 211 to 358 (GMMAGPVASS…QLVSDRTDDK (148 aa)) is disordered. Positions 265–277 (VPDSSSDSVSRSP) are enriched in low complexity. A compositionally biased stretch (polar residues) spans 290-299 (NVTSSSQGLS). Ser295 bears the Phosphoserine mark. Residues 300 to 310 (QRDRPRLRSVS) are compositionally biased toward basic and acidic residues. The active-site Nucleophile is the Cys443. His664 (proton acceptor) is an active-site residue.

Belongs to the MINDY deubiquitinase family. FAM188 subfamily.

It catalyses the reaction Thiol-dependent hydrolysis of ester, thioester, amide, peptide and isopeptide bonds formed by the C-terminal Gly of ubiquitin (a 76-residue protein attached to proteins as an intracellular targeting signal).. Its function is as follows. Probable hydrolase that can remove 'Lys-48'-linked conjugated ubiquitin from proteins. The polypeptide is Probable ubiquitin carboxyl-terminal hydrolase MINDY-4 (Mindy4) (Mus musculus (Mouse)).